We begin with the raw amino-acid sequence, 244 residues long: Transcriptional regulatory protein YpdB (244 aa).

Residues 2-116 (KVIIVEDEFL…RITGMLQKLE (115 aa)) enclose the Response regulatory domain. Asp53 carries the 4-aspartylphosphate modification. The region spanning 139–244 (INLVKDERII…VKEFRQLMHL (106 aa)) is the HTH LytTR-type domain.

In terms of processing, phosphorylated by YpdA.

Its subcellular location is the cytoplasm. Member of the two-component regulatory system YpdA/YpdB. YpdB regulates expression of yhjX by binding to its promoter region. The chain is Transcriptional regulatory protein YpdB (ypdB) from Escherichia coli O157:H7.